The primary structure comprises 310 residues: ADP-L-glycero-D-manno-heptose-6-epimerase (310 aa).

Residues 10–11 (FI), 31–32 (DN), lysine 38, lysine 53, 75–79 (EGACS), and asparagine 92 each bind NADP(+). Catalysis depends on tyrosine 140, which acts as the Proton acceptor. NADP(+) is bound at residue lysine 144. Residue asparagine 169 participates in substrate binding. The NADP(+) site is built by valine 170 and lysine 178. Lysine 178 (proton acceptor) is an active-site residue. Substrate is bound by residues serine 180, histidine 187, 201–204 (FEGS), arginine 209, and tyrosine 272.

This sequence belongs to the NAD(P)-dependent epimerase/dehydratase family. HldD subfamily. In terms of assembly, homopentamer. NADP(+) serves as cofactor.

It carries out the reaction ADP-D-glycero-beta-D-manno-heptose = ADP-L-glycero-beta-D-manno-heptose. It functions in the pathway nucleotide-sugar biosynthesis; ADP-L-glycero-beta-D-manno-heptose biosynthesis; ADP-L-glycero-beta-D-manno-heptose from D-glycero-beta-D-manno-heptose 7-phosphate: step 4/4. In terms of biological role, catalyzes the interconversion between ADP-D-glycero-beta-D-manno-heptose and ADP-L-glycero-beta-D-manno-heptose via an epimerization at carbon 6 of the heptose. In Klebsiella pneumoniae subsp. pneumoniae (strain ATCC 700721 / MGH 78578), this protein is ADP-L-glycero-D-manno-heptose-6-epimerase.